We begin with the raw amino-acid sequence, 952 residues long: Eukaryotic initiation factor 4F subunit p150 (952 aa).

3 disordered regions span residues 1–77, 115–389, and 481–575; these read MTDE…NYNG, GSAP…DAGT, and VIPP…LVPS. The segment covering 7–16 has biased composition (polar residues); sequence HPTQSASKQE. A compositionally biased stretch (low complexity) spans 29 to 46; it reads ESQQQRGYTNYNNGSNYT. The segment covering 47–56 has biased composition (polar residues); the sequence is QKKPYNSNRP. Over residues 65-74 the composition is skewed to low complexity; the sequence is GPNRYNNRGN. The segment covering 140–151 has biased composition (basic and acidic residues); that stretch reads SGEHLDLKEQHK. A compositionally biased stretch (polar residues) spans 154–166; sequence LQSQERSTVSPQP. Ser163 carries the post-translational modification Phosphoserine. Low complexity predominate over residues 175–191; it reads DSTSTSTPTPTPSTNDS. Thr181 is modified (phosphothreonine). The segment at 188–299 is interaction with PAB1; that stretch reads TNDSKASSEE…KEESTPKVLT (112 aa). Phosphoserine is present on Ser195. Basic and acidic residues predominate over residues 218-228; sequence AALEKKRKEQL. Over residues 229 to 244 the composition is skewed to polar residues; that stretch reads EGSSGNNNIPMKTTPE. Basic and acidic residues-rich tracts occupy residues 246–276, 283–294, and 309–333; these read VEEKGSDKPEVTEKTKPAEEKSAEPEVKQET, QGEKGQIKEEST, and QQKEREEKTEGKENKEVPVQEETKS. The span at 355–368 shows a compositional bias: polar residues; it reads TEQSNIDESATTPA. Position 503 is a phosphoserine (Ser503). 2 stretches are compositionally biased toward basic and acidic residues: residues 504–521 and 532–569; these read RGHDFRNTSVRNMDDRAN and RMNDDRRSNRSYTSRRDRERGSYRNEEKREDDKPKEEV. Residues 607–850 enclose the MIF4G domain; sequence ERKMKSLLNK…IDIKELRHDK (244 aa). Positions 870-952 are disordered; it reads EEERQRQLKN…ALMGESDDEE (83 aa). The segment covering 879-894 has biased composition (low complexity); it reads NNSRSNSRRTNNSSNR. Residue Ser883 is modified to Phosphoserine. Thr888 carries the phosphothreonine modification. Residues Ser892, Ser896, Ser908, and Ser948 each carry the phosphoserine modification. The span at 908-922 shows a compositional bias: polar residues; that stretch reads SFITTRTYSQRNSQR.

The protein belongs to the eukaryotic initiation factor 4G family. In terms of assembly, component of the eIF4F complex, which composition varies with external and internal environmental conditions. It is composed of at least eIF4A (TIF1/TIF2), eIF4E (TIF45) and eIF4G (TIF4631 or TIF4632). Interacts with PAT1 in a RNA-dependent manner.

The protein localises to the cytoplasm. It localises to the P-body. It is found in the stress granule. Component of the eIF4F complex, which interacts with the mRNA cap structure and serves as an initial point of assembly for the translation apparatus. Stimulates translation by interaction with polyadenylate-binding protein PAB1, bringing the 5'- and 3'-ends of the mRNA in proximity. The formation of this circular mRNP structure appears to be critical for the synergistic effects of the cap and the poly(A) tail in facilitating translation initiation, recycling of ribosomes, and mRNA stability. TIF4631 is probably essential when TIF4632 is missing. This is Eukaryotic initiation factor 4F subunit p150 from Saccharomyces cerevisiae (strain ATCC 204508 / S288c) (Baker's yeast).